We begin with the raw amino-acid sequence, 177 residues long: Arginine metabolism regulation protein I (177 aa).

A compositionally biased stretch (polar residues) spans 1–12 (MTSNSDGSSTSP). Disordered regions lie at residues 1 to 82 (MTSN…TRRK) and 157 to 177 (NASD…SPAN). Residues 40–53 (QDQEGDFDEEDDDD) show a composition bias toward acidic residues. The span at 56–67 (SVSTSTPTPTIT) shows a compositional bias: low complexity. The MADS-box domain occupies 80-134 (RRKQPIRYIENKTRRHVTFSKRRHGIMKKAYELSVLTGANILLLILANSGLVYTF). Over residues 158 to 177 (ASDTPDATDTSPAQEQSPAN) the composition is skewed to polar residues.

Interacts with ARG81 and ARG82.

The protein resides in the nucleus. With ARG81, ARG82 and MCM1, coordinates the expression of arginine anabolic and catabolic genes in response to arginine. The chain is Arginine metabolism regulation protein I (ARG80) from Saccharomyces cerevisiae (strain ATCC 204508 / S288c) (Baker's yeast).